Here is a 325-residue protein sequence, read N- to C-terminus: Pyruvate dehydrogenase E1 component subunit beta (325 aa).

Residue E60 participates in thiamine diphosphate binding.

In terms of assembly, heterodimer of an alpha and a beta chain. It depends on thiamine diphosphate as a cofactor.

Its subcellular location is the cytoplasm. It is found in the secreted. It catalyses the reaction N(6)-[(R)-lipoyl]-L-lysyl-[protein] + pyruvate + H(+) = N(6)-[(R)-S(8)-acetyldihydrolipoyl]-L-lysyl-[protein] + CO2. Activity of the E1 module is inhibited by the pyruvate dehydrogenase inhibitor PdhI. Functionally, the pyruvate dehydrogenase complex catalyzes the overall conversion of pyruvate to acetyl-CoA and CO(2). It contains multiple copies of three enzymatic components: pyruvate dehydrogenase (E1), dihydrolipoamide acetyltransferase (E2) and lipoamide dehydrogenase (E3). In terms of biological role, the B.subtilis PDH complex also possesses branched-chain 2-oxoacid dehydrogenase (BCDH) activity. This chain is Pyruvate dehydrogenase E1 component subunit beta, found in Bacillus subtilis (strain 168).